The primary structure comprises 703 residues: Elongation factor G (703 aa).

One can recognise a tr-type G domain in the interval 9–292; sequence ERTRNIGIMA…AVVDYLPGPL (284 aa). GTP is bound by residues 18–25, 91–95, and 145–148; these read AHIDAGKT, DTPGH, and NKMD.

The protein belongs to the TRAFAC class translation factor GTPase superfamily. Classic translation factor GTPase family. EF-G/EF-2 subfamily.

The protein resides in the cytoplasm. Catalyzes the GTP-dependent ribosomal translocation step during translation elongation. During this step, the ribosome changes from the pre-translocational (PRE) to the post-translocational (POST) state as the newly formed A-site-bound peptidyl-tRNA and P-site-bound deacylated tRNA move to the P and E sites, respectively. Catalyzes the coordinated movement of the two tRNA molecules, the mRNA and conformational changes in the ribosome. The chain is Elongation factor G from Leuconostoc mesenteroides subsp. mesenteroides (strain ATCC 8293 / DSM 20343 / BCRC 11652 / CCM 1803 / JCM 6124 / NCDO 523 / NBRC 100496 / NCIMB 8023 / NCTC 12954 / NRRL B-1118 / 37Y).